Consider the following 627-residue polypeptide: MATRPTDMVNTMQDAAVTCGPIPGSHKRYLGGVRFPELRIPLREIRQSDSRKRDGSLEVNPAIPVYDCSGPYTDPDVVIDIHAGLPAMRWQWSPTDTAIESRPEPGSAYGRARLADVRTADLRFHHRREIRRAANGGNVSQMHYARRGIITPEMEFVAIRENQGLEHLRASHPALFRAHRGESFGAQIPDTITPEFVRDEIARGRAIIPANINHPELEPMIIGRNFLVKINANIGNSAVTSSIAEEVEKMVWSIRWGADTVMDLSTGRHIHETREWIIRNSPVPIGTVPIYQALEKVDGKAEDLTWDLFRDTLIEQAEQGVDYFTIHAGVLLRYIPLTANRLTGIVSRGGSIMAKWCLAHHQESFLYTHFEEICEIMKAYDVSFSLGDGLRPGSLADANDEAQFAELHTLGELTRIAWKHDVQVMIEGPGHVPMQLIKANMEEELQHCFEAPFYTLGPLTTDIAPGYDHITSAIGAAQIGWYGTAMLCYVTPKEHLGLPDKNDVREGAITYKIAAHAADLAKGHPGAQVRDNALSKARFEFRWEDQFHLGLDPEKAREYHDETLPQEGAKAAHFCSMCGPHFCSMKISQDLQEYAQSKGEDIETARLEGLQEKAEDFKRLGKNIYLR.

Substrate is bound by residues Asn233, Met262, Tyr291, His327, 347 to 349 (SRG), 388 to 391 (DGLR), and Glu427. Residue His431 participates in Zn(2+) binding. Tyr454 is a binding site for substrate. His495 contributes to the Zn(2+) binding site. 3 residues coordinate [4Fe-4S] cluster: Cys575, Cys578, and Cys583.

It belongs to the ThiC family. As to quaternary structure, homodimer. [4Fe-4S] cluster is required as a cofactor.

It catalyses the reaction 5-amino-1-(5-phospho-beta-D-ribosyl)imidazole + S-adenosyl-L-methionine = 4-amino-2-methyl-5-(phosphooxymethyl)pyrimidine + CO + 5'-deoxyadenosine + formate + L-methionine + 3 H(+). Its pathway is cofactor biosynthesis; thiamine diphosphate biosynthesis. Functionally, catalyzes the synthesis of the hydroxymethylpyrimidine phosphate (HMP-P) moiety of thiamine from aminoimidazole ribotide (AIR) in a radical S-adenosyl-L-methionine (SAM)-dependent reaction. In Acidithiobacillus ferrooxidans (strain ATCC 23270 / DSM 14882 / CIP 104768 / NCIMB 8455) (Ferrobacillus ferrooxidans (strain ATCC 23270)), this protein is Phosphomethylpyrimidine synthase.